The chain runs to 220 residues: Small ribosomal subunit protein uS3 (220 aa).

The 69-residue stretch at isoleucine 38–arginine 106 folds into the KH type-2 domain.

It belongs to the universal ribosomal protein uS3 family. Part of the 30S ribosomal subunit. Forms a tight complex with proteins S10 and S14.

In terms of biological role, binds the lower part of the 30S subunit head. Binds mRNA in the 70S ribosome, positioning it for translation. The protein is Small ribosomal subunit protein uS3 of Myxococcus xanthus (strain DK1622).